The primary structure comprises 309 residues: Homoserine O-succinyltransferase (309 aa).

Catalysis depends on cysteine 142, which acts as the Acyl-thioester intermediate. The substrate site is built by lysine 163 and serine 192. The Proton acceptor role is filled by histidine 235. Glutamate 237 is a catalytic residue. Residue arginine 249 coordinates substrate.

The protein belongs to the MetA family.

The protein localises to the cytoplasm. The catalysed reaction is L-homoserine + succinyl-CoA = O-succinyl-L-homoserine + CoA. Its pathway is amino-acid biosynthesis; L-methionine biosynthesis via de novo pathway; O-succinyl-L-homoserine from L-homoserine: step 1/1. Functionally, transfers a succinyl group from succinyl-CoA to L-homoserine, forming succinyl-L-homoserine. The chain is Homoserine O-succinyltransferase from Citrobacter koseri (strain ATCC BAA-895 / CDC 4225-83 / SGSC4696).